We begin with the raw amino-acid sequence, 161 residues long: Transcriptional regulator MraZ (161 aa).

SpoVT-AbrB domains are found at residues 7–55 and 84–127; these read RYTN…GPAF and SAEL…EPGA.

This sequence belongs to the MraZ family. In terms of assembly, forms oligomers.

It localises to the cytoplasm. It is found in the nucleoid. The protein is Transcriptional regulator MraZ of Parvibaculum lavamentivorans (strain DS-1 / DSM 13023 / NCIMB 13966).